An 871-amino-acid chain; its full sequence is MSESTAYTIILHGNDATGKSTLVPALRAAGEVIYARGDDDATLEDTIVVRSFDKFTLRLADDDRGPLPQSYTDKDGVQRRIVRIILDADLDVLQARLAKRPSTDQWESEKSLFYFRARFLGHQELAAYHGLPVINTGEKSLDETMAEIIALARNPETLALFSKLALRTLTPEDVASLADRRAVIAGVDYAKRLEDIIAAECGETSLFTPEDVRAQCLEDPGLVHALVNHHDNLHDAEAPLRLRQIVEGESKQIYKVESPLTHHFDNLVLVFLKPTIYSHSKQATAEISGLSAVRASGSRLFLEMLHRAGISHTYHGLSAHGLIWARSTEITQIETVYKELCAGTDKHSFFGMAADPNVTLPTGQYKRGPYVRFDWRNPNHVYNGVNPATHPFYHLMEASVGKNAFYDKYLTGRAKPLGDKCVPEELVHSVQAVEASVDWTTRIFFTIQHYLHQIGLEVQDGCVMLDPTGRIMWSEINQDCMRIKRRERTETTNGSHQGVFDKDVWRAGGSSVKEAILDKWTQLNGLLREHLAGRPFHENEMVAAFEPYGMHATEVLADKTLTLTPRYRALYERLATHDRSLLRSGGSADKAASERLLALMQEHIWQAIAAVPPLNGHDEAKRMVRLANTFARRVGLPPAEVSALSDADAETILGRTATPPGSKAIGVTANKYADKTDEFALAELGIKLLRPTGRCLRITYELVDQAKYTKAFGAGVTVHFVPTRPKDMPGLLAQGMLDGAVTYSSVMDNFPTVARLVASTPDADISLALIRRRGQAIDPHGWSADRPARIVAEHGRMVRAHLAGLGVSPTTYEIQHVLGSSESYLVNDPRETYLLCDAVIATGGTIQENDLDVWQVVKNKGELLVGLYQRV.

It functions in the pathway secondary metabolite biosynthesis. Functionally, nucleoside/nucleotide kinase; part of the gene cluster that mediates the biosynthesis of cordycepin (COR) and pentostatin (PTN), two adenosine analogs with related bioactivity profiles as both mimic adenosine and can inhibit some of the processes that are adenosine dependent. Within the pathway, cns3 catalyzes both the first step of cordycepin biosynthesis by phosphorylating adenosine into 3'-AMP via its kinase activity and the conversion of adenosine into pentostatin via its ATP phosphoribosyltransferase activity. The first step of cordycepin biosynthesis involves hydroxyl phosphorylation of the 3'-OH position on adenosine to produce adenosine-3'-monophosphate (3'-AMP), catalyzed by kinase activity of cns3. Next, 3'-AMP is dephosphorylated to 2'-carbonyl-3'-deoxyadenosine (2'-C-3'-dA) by cns2, which is finally converted to cordycepin (3'-deoxyadenosine) by the oxidoreductase cns1. This is Bifunctional cordycepin biosynthesis cluster protein 3 from Cordyceps militaris (strain CM01) (Caterpillar fungus).